The primary structure comprises 687 residues: Adhesion G-protein coupled receptor G1 (687 aa).

The first 25 residues, 1-25 (MTAQSLLQTTLFLLSLLFLVQGAHG), serve as a signal peptide directing secretion. A heparin-binding site is contributed by 26–33 (RGHREDFR). Residues 26–402 (RGHREDFRFC…VEVDAVHKHY (377 aa)) are Extracellular-facing. 2 cysteine pairs are disulfide-bonded: Cys-35-Cys-91 and Cys-121-Cys-177. Residues Asn-39, Asn-148, Asn-156, and Asn-171 are each glycosylated (N-linked (GlcNAc...) asparagine). 190–200 (LKHPQKASRRP) contributes to the heparin binding site. Residues 224–395 (DTVSFEEDRV…AVLMVSSVEV (172 aa)) form the GAIN-B domain. Residues Asn-234, Asn-303, Asn-324, and Asn-341 are each glycosylated (N-linked (GlcNAc...) asparagine). 2 disulfides stabilise this stretch: Cys-346/Cys-377 and Cys-366/Cys-379. The segment at 346–395 (CVFWVEDPTLSNPGRWSSAGCETVRRETQTSCFCNHLTYFAVLMVSSVEV) is GPS. The segment at 384 to 397 (YFAVLMVSSVEVDA) is stachel. A helical membrane pass occupies residues 403 to 423 (LSLLSYVGCVVSALACVVTIA). Residues 424–442 (AYLCSRRKPRDYTIKVHMN) are Cytoplasmic-facing. A helical transmembrane segment spans residues 443–463 (LLLAVFLLDVSFLLSEPVALT). Residues 464-470 (GSQSGCR) are Extracellular-facing. A helical transmembrane segment spans residues 471 to 491 (ASAIFLHFSLLACLSWMGLEG). The Cytoplasmic segment spans residues 492–512 (YNLYRLVVEVFGTYIPGYLLK). The helical transmembrane segment at 513–533 (LSAMGWGFPIFLVTLVALVDV) threads the bilayer. Residues 534-570 (DNYGPIILAVHRTPESVIYPSMCWIRDSLVSYITNLG) are Extracellular-facing. Residues 571–591 (LFSLVFLFNMAMLGTMVVQIL) form a helical membrane-spanning segment. The Cytoplasmic portion of the chain corresponds to 592–603 (RLRPHTQKWSHV). A helical membrane pass occupies residues 604 to 624 (LTLLGLSLVLGLPWALIFFSF). Residues 625–630 (ASGTFQ) are Extracellular-facing. Residues 631–651 (LVVLYLFSIITSFQGFLIFLW) traverse the membrane as a helical segment. The Cytoplasmic segment spans residues 652 to 687 (YWSMRLQARGGPSPLKSNSDSARLPISTGSTSSSRI). Positions 664 to 687 (SPLKSNSDSARLPISTGSTSSSRI) are disordered. A compositionally biased stretch (polar residues) spans 666–687 (LKSNSDSARLPISTGSTSSSRI).

It belongs to the G-protein coupled receptor 2 family. LN-TM7 subfamily. In terms of assembly, heterodimer of 2 chains generated by proteolytic processing; the large extracellular N-terminal fragment (ADGRG1 NT) and the membrane-bound C-terminal fragment (ADGRG1-CT) predominantly remain associated and non-covalently linked. ADGRG1 NT self-associates in a trans-trans manner; the homophilic interaction enhances receptor signaling. Interacts with TGM2. Interacts with heparin; leading to the reduction of ADGRG1 shedding. Interacts with COL3A1. Part of a GPCR-tetraspanin complex at least consisting of ADGRG1, CD81, eventually CD9, and GNA11 in which CD81 is enhancing the association of ADGRG1 with GNA11. Post-translationally, autoproteolytically cleaved into 2 fragments; the large extracellular N-terminal fragment (ADGRG1 NT) and the membrane-bound C-terminal fragment (ADGRG1 CT) predominantly remain associated and non-covalently linked. Shedding to yield the secreted ADGRG1 N-terminal fragment seems to involve metalloprotease(s). In terms of processing, ubiquitinated. Undergoes polyubiquitination upon activation.

The protein resides in the cell membrane. It is found in the secreted. It localises to the membrane raft. Forms a heterodimer of 2 chains generated by proteolytic processing that remain associated through non-covalent interactions mediated by the GAIN-B domain. In the inactivated receptor, the Stachel sequence (also named stalk) is embedded in the GAIN-B domain, where it adopts a beta-strand conformation. On activation, the Stachel moves into the 7 transmembrane region and adopts a twisted hook-shaped configuration that forms contacts within the receptor, leading to coupling of a G-alpha protein, which activates signaling. The cleaved GAIN-B and N-terminal domains can then dissociate from the rest of the receptor. Its function is as follows. Adhesion G-protein coupled receptor (aGPCR) for steroid hormone 17alpha-hydroxypregnenolone (17-OH), which is involved in cell adhesion and cell-cell interactions. Ligand binding causes a conformation change that triggers signaling via guanine nucleotide-binding proteins (G proteins) and modulates the activity of downstream effectors, such as RhoA pathway. ADGRG1 is coupled to G(12) and/or G(13) G proteins (GNA12 and GNA13, respectively) and mediates the activation Rho small GTPases. Acts as a potent suppressor of ferroptosis: binding to 17-OH-binding initiates signaling that down-regulates CD36 and alleviates ferroptosis-induced liver injury. Ligand-binding also induces cell adhesion activity via association with proteins such as collagen III/COL3A1 and TGM2. Mediates cell matrix adhesion in developing neurons and hematopoietic stem cells. Involved in cortical development, specifically in maintenance of the pial basement membrane integrity and in cortical lamination: association with COL3A1 in the developing brain inhibits neuronal migration via activation of the RhoA pathway. Together with TGM2, acts as a regulator of myelination and myelin repair in oligodendrocyte precursor cells. Acts as a hemostatic sensor of shear force: G protein-coupled receptor signaling is activated in response to shear force in platelets, promoting G(13) G protein signaling, and platelet shape change and aggregation in a COL3A1-dependent manner. Acts as an inhibitor of VEGFA production thereby inhibiting angiogenesis through a signaling pathway mediated by PRKCA. Plays a role in the maintenance of hematopoietic stem cells in bone marrow niche. Plays an essential role in testis development. The chain is Adhesion G-protein coupled receptor G1 (ADGRG1) from Macaca mulatta (Rhesus macaque).